Reading from the N-terminus, the 275-residue chain is ATP synthase subunit delta (275 aa).

Belongs to the ATPase delta chain family. In terms of assembly, F-type ATPases have 2 components, F(1) - the catalytic core - and F(0) - the membrane proton channel. F(1) has five subunits: alpha(3), beta(3), gamma(1), delta(1), epsilon(1). F(0) has three main subunits: a(1), b(2) and c(10-14). The alpha and beta chains form an alternating ring which encloses part of the gamma chain. F(1) is attached to F(0) by a central stalk formed by the gamma and epsilon chains, while a peripheral stalk is formed by the delta and b chains.

Its subcellular location is the cell membrane. F(1)F(0) ATP synthase produces ATP from ADP in the presence of a proton or sodium gradient. F-type ATPases consist of two structural domains, F(1) containing the extramembraneous catalytic core and F(0) containing the membrane proton channel, linked together by a central stalk and a peripheral stalk. During catalysis, ATP synthesis in the catalytic domain of F(1) is coupled via a rotary mechanism of the central stalk subunits to proton translocation. In terms of biological role, this protein is part of the stalk that links CF(0) to CF(1). It either transmits conformational changes from CF(0) to CF(1) or is implicated in proton conduction. This Nocardioides sp. (strain ATCC BAA-499 / JS614) protein is ATP synthase subunit delta.